Consider the following 669-residue polypeptide: Sodium-dependent phosphate transporter (669 aa).

Residues 1 to 6 (MVTGPD) lie on the Extracellular side of the membrane. The helical transmembrane segment at 7–27 (MLWLVITSGIACFFMAFVTGA) threads the bilayer. Residues 28-47 (NDIANTFSTSIGSKAISIKK) are Cytoplasmic-facing. A helical membrane pass occupies residues 48-68 (ALIVAFFFEALGASLLGGTVT). At 69-86 (DSIRSKIINFQVFYDTPE) the chain is on the extracellular side. A helical transmembrane segment spans residues 87 to 107 (FLMLGMCCALMGATVWLAVAT). Position 108 (R108) is a topological domain, cytoplasmic. A helical transmembrane segment spans residues 109 to 129 (AGLPVSTTHSIIGALLGFGLA). At 130-143 (TGNMKSIKWEKINN) the chain is on the extracellular side. Residues 144–164 (IVISWLAAPILAGTCSAIAFT) traverse the membrane as a helical segment. Residues 165 to 186 (VLRMLILRKKNSFEIIKKMYWF) lie on the Cytoplasmic side of the membrane. A helical membrane pass occupies residues 187 to 207 (LIFLITLPFSVFLIFHNPIVI). Residues 208–239 (NTQCKMKKDGKVIVSSPCYIEDWSAAHSFYAS) are Extracellular-facing. The chain crosses the membrane as a helical span at residues 240 to 260 (IICILLSSLLTAIGSFVIYII). Over 261–502 (YNKRINNYNL…YNNGIRGKIK (242 aa)) the chain is Cytoplasmic. Polar residues predominate over residues 311–335 (AHNNTSNGTKQNQVGNGTKSNNNNV). Disordered stretches follow at residues 311 to 364 (AHNN…SVEA) and 392 to 444 (TNMN…KNME). Positions 342-352 (KNVKSQQDDSK) are enriched in basic and acidic residues. The segment covering 395–433 (NENNNNSNKNNNSNKNNNSNKNNNSNKNNNSNNGNSNEG) has biased composition (low complexity). The chain crosses the membrane as a helical span at residues 503-523 (VQWYILLFGGLSMSLGLSIMG). Topologically, residues 524–542 (YRVIKTVGMKLIKITPARG) are extracellular. The helical transmembrane segment at 543–563 (FTIELISGLVVLFFSICGIPL) threads the bilayer. At 564–632 (SSTHCAVSSV…TSCVNLRLFR (69 aa)) the chain is on the cytoplasmic side. Residues 633–653 (TVFLSWILTVVFSATVTAGIY) traverse the membrane as a helical segment. The Extracellular portion of the chain corresponds to 654–669 (SFAAYSPSYIMKMQTV).

The protein belongs to the inorganic phosphate transporter (PiT) (TC 2.A.20) family.

The protein localises to the cell membrane. The catalysed reaction is 2 Na(+)(out) + phosphate(out) = 2 Na(+)(in) + phosphate(in). Sodium-phosphate symporter which preferentially transports the monovalent form of phosphate with a stoichiometry of two sodium ions per phosphate ion. This is Sodium-dependent phosphate transporter from Plasmodium falciparum.